A 249-amino-acid chain; its full sequence is 5'-nucleotidase SurE (249 aa).

A divalent metal cation contacts are provided by Asp9, Asp10, Ser40, and Asn92.

Belongs to the SurE nucleotidase family. Requires a divalent metal cation as cofactor.

The protein localises to the cytoplasm. The catalysed reaction is a ribonucleoside 5'-phosphate + H2O = a ribonucleoside + phosphate. Its function is as follows. Nucleotidase that shows phosphatase activity on nucleoside 5'-monophosphates. In Shewanella sediminis (strain HAW-EB3), this protein is 5'-nucleotidase SurE.